A 310-amino-acid polypeptide reads, in one-letter code: tRNA uridine(34) hydroxylase (310 aa).

The region spanning 124 to 218 is the Rhodanese domain; it reads SDPEVLLIDT…YFEEVPQEES (95 aa). C178 functions as the Cysteine persulfide intermediate in the catalytic mechanism.

The protein belongs to the TrhO family.

It catalyses the reaction uridine(34) in tRNA + AH2 + O2 = 5-hydroxyuridine(34) in tRNA + A + H2O. Its function is as follows. Catalyzes oxygen-dependent 5-hydroxyuridine (ho5U) modification at position 34 in tRNAs. The chain is tRNA uridine(34) hydroxylase from Pseudomonas putida (strain ATCC 47054 / DSM 6125 / CFBP 8728 / NCIMB 11950 / KT2440).